The following is a 348-amino-acid chain: GTP 3',8-cyclase (348 aa).

One can recognise a Radical SAM core domain in the interval 24-248 (PFGRAVTYLR…TDIDYQTGGP (225 aa)). Arginine 33 provides a ligand contact to GTP. Residues cysteine 40 and cysteine 44 each coordinate [4Fe-4S] cluster. Tyrosine 46 provides a ligand contact to S-adenosyl-L-methionine. A [4Fe-4S] cluster-binding site is contributed by cysteine 47. GTP is bound at residue arginine 82. Residue glycine 86 participates in S-adenosyl-L-methionine binding. Residue threonine 115 participates in GTP binding. Serine 139 is an S-adenosyl-L-methionine binding site. Lysine 175 is a GTP binding site. Residue methionine 209 participates in S-adenosyl-L-methionine binding. Cysteine 272 and cysteine 275 together coordinate [4Fe-4S] cluster. 277–279 (RVR) provides a ligand contact to GTP. Cysteine 289 serves as a coordination point for [4Fe-4S] cluster.

Belongs to the radical SAM superfamily. MoaA family. Monomer and homodimer. The cofactor is [4Fe-4S] cluster.

It carries out the reaction GTP + AH2 + S-adenosyl-L-methionine = (8S)-3',8-cyclo-7,8-dihydroguanosine 5'-triphosphate + 5'-deoxyadenosine + L-methionine + A + H(+). The protein operates within cofactor biosynthesis; molybdopterin biosynthesis. Catalyzes the cyclization of GTP to (8S)-3',8-cyclo-7,8-dihydroguanosine 5'-triphosphate. This Rhizobium etli (strain ATCC 51251 / DSM 11541 / JCM 21823 / NBRC 15573 / CFN 42) protein is GTP 3',8-cyclase.